The chain runs to 91 residues: Small ribosomal subunit protein bS20 (91 aa).

The interval 1-23 is disordered; that stretch reads MANTSSAKKATRKIARRTEVNKA.

Belongs to the bacterial ribosomal protein bS20 family.

Its function is as follows. Binds directly to 16S ribosomal RNA. This chain is Small ribosomal subunit protein bS20, found in Rhizobium rhizogenes (strain K84 / ATCC BAA-868) (Agrobacterium radiobacter).